A 400-amino-acid chain; its full sequence is MYPYPNEIGRYGDFGGKFVPETLMQPLDEIQTAFKQIKDDPAFREEYYKLLKDYSGRPTALTYADRVTEYLGGAKIYLKREDLNHTGSHKINNALGQALLAKKMGKTKIIAETGAGQHGVAAATVAAKFGFSCTVFMGEEDVARQSLNVFRMKLLGAEVVPVTSGNGTLKDATNEAIRYWVQHCEDHFYMIGSVVGPHPYPQVVREFQKMIGEEAKDQLKRIEGTMPDKVVACVGGGSNAMGMFQAFLNEDVELIGAEAAGKGIDTPLHAATISKGTVGVIHGSLTYLIQDEFGQIIEPYSISAGLDYPGIGPEHAYLHKSGRVTYDSITDEEAVDALKLLSEKEGILPAIESAHALAKAFKLAKGMDRGQLILVCLSGRGDKDVNTLMNVLEEEVKAHV.

Lys90 bears the N6-(pyridoxal phosphate)lysine mark.

This sequence belongs to the TrpB family. As to quaternary structure, tetramer of two alpha and two beta chains. It depends on pyridoxal 5'-phosphate as a cofactor.

It carries out the reaction (1S,2R)-1-C-(indol-3-yl)glycerol 3-phosphate + L-serine = D-glyceraldehyde 3-phosphate + L-tryptophan + H2O. The protein operates within amino-acid biosynthesis; L-tryptophan biosynthesis; L-tryptophan from chorismate: step 5/5. Functionally, the beta subunit is responsible for the synthesis of L-tryptophan from indole and L-serine. The sequence is that of Tryptophan synthase beta chain (trpB) from Bacillus subtilis (strain 168).